The following is a 216-amino-acid chain: Thiamine-phosphate synthase (216 aa).

Residues 40–44 (QLRIK) and asparagine 72 contribute to the 4-amino-2-methyl-5-(diphosphooxymethyl)pyrimidine site. Residues aspartate 73 and aspartate 92 each coordinate Mg(2+). Serine 111 serves as a coordination point for 4-amino-2-methyl-5-(diphosphooxymethyl)pyrimidine. 2-[(2R,5Z)-2-carboxy-4-methylthiazol-5(2H)-ylidene]ethyl phosphate is bound at residue 137 to 139 (TTT). Position 140 (lysine 140) interacts with 4-amino-2-methyl-5-(diphosphooxymethyl)pyrimidine. Residues glycine 169 and 189–190 (VS) contribute to the 2-[(2R,5Z)-2-carboxy-4-methylthiazol-5(2H)-ylidene]ethyl phosphate site.

The protein belongs to the thiamine-phosphate synthase family. The cofactor is Mg(2+).

The enzyme catalyses 2-[(2R,5Z)-2-carboxy-4-methylthiazol-5(2H)-ylidene]ethyl phosphate + 4-amino-2-methyl-5-(diphosphooxymethyl)pyrimidine + 2 H(+) = thiamine phosphate + CO2 + diphosphate. It carries out the reaction 2-(2-carboxy-4-methylthiazol-5-yl)ethyl phosphate + 4-amino-2-methyl-5-(diphosphooxymethyl)pyrimidine + 2 H(+) = thiamine phosphate + CO2 + diphosphate. It catalyses the reaction 4-methyl-5-(2-phosphooxyethyl)-thiazole + 4-amino-2-methyl-5-(diphosphooxymethyl)pyrimidine + H(+) = thiamine phosphate + diphosphate. The protein operates within cofactor biosynthesis; thiamine diphosphate biosynthesis; thiamine phosphate from 4-amino-2-methyl-5-diphosphomethylpyrimidine and 4-methyl-5-(2-phosphoethyl)-thiazole: step 1/1. Functionally, condenses 4-methyl-5-(beta-hydroxyethyl)thiazole monophosphate (THZ-P) and 2-methyl-4-amino-5-hydroxymethyl pyrimidine pyrophosphate (HMP-PP) to form thiamine monophosphate (TMP). The polypeptide is Thiamine-phosphate synthase (Photorhabdus laumondii subsp. laumondii (strain DSM 15139 / CIP 105565 / TT01) (Photorhabdus luminescens subsp. laumondii)).